Reading from the N-terminus, the 439-residue chain is Oocyte zinc finger protein XlCOF28 (439 aa).

9 C2H2-type zinc fingers span residues 6–28 (YECTECEKTFSNQSVLSLHQRTH), 34–56 (FKCTECEKSFMKRSQLIVHKKCH), 62–84 (YMCTFCEKGYNQHSKLIEHIRTH), 90–112 (FTCTECKKSFTKRCNLTEHLRIH), 118–140 (HKCNLCDKTFHYPSNLVEHQRTH), 146–168 (FQCTECDKSFIKMSKLMVHLRIH), 174–196 (YKCSECDKSFSQQSTLVVHQRTH), 202–224 (FQCSHCEKSFSYHYAFVVHERTH), and 230–252 (YKCSMCDKAYSQRSNLKLHQKTH). 2 disordered regions span residues 246–275 (KLHQKTHESKPQQDSPNCEKTFEQESAPKT) and 285–304 (AGLEKVPELPEATNSVESPE). C2H2-type zinc fingers lie at residues 333–355 (HKCTECDKCFLEKSKLVVHQRTH), 361–383 (FKCSVCDKTFIRMVHLLEHRKIH), 389–411 (YTCAECGKSFIRMSKLTVHRRTH), and 417–439 (YICAECGKQFSQQSNLVVHQRIH).

This sequence belongs to the krueppel C2H2-type zinc-finger protein family.

Its subcellular location is the nucleus. Functionally, may be involved in transcriptional regulation. This is Oocyte zinc finger protein XlCOF28 from Xenopus laevis (African clawed frog).